The chain runs to 101 residues: UPF0235 protein CJA_0091 (101 aa).

The protein belongs to the UPF0235 family.

The protein is UPF0235 protein CJA_0091 of Cellvibrio japonicus (strain Ueda107) (Pseudomonas fluorescens subsp. cellulosa).